The following is a 280-amino-acid chain: Inner kinetochore subunit fta1 (280 aa).

This sequence belongs to the CENP-L/IML3 family. In terms of assembly, component of the inner kinetochore constitutive centromere-associated network (CCAN) (also known as central kinetochore Sim4 complex in fission yeast), which is composed of at least cnl2, cnp3, cnp20, fta1, fta2, fta3, fta4, fta6, fta7, mal2, mhf1, mhf2, mis6, mis15, mis17, sim4 and wip1.

It localises to the nucleus. It is found in the chromosome. The protein localises to the centromere. The protein resides in the kinetochore. Component of the kinetochore, a multiprotein complex that assembles on centromeric DNA and attaches chromosomes to spindle microtubules, mediating chromosome segregation and sister chromatid segregation during meiosis and mitosis. Component of the inner kinetochore constitutive centromere-associated network (CCAN), which serves as a structural platform for outer kinetochore assembly. This is Inner kinetochore subunit fta1 (fta1) from Schizosaccharomyces pombe (strain 972 / ATCC 24843) (Fission yeast).